The sequence spans 162 residues: Protein NrdI (162 aa).

This sequence belongs to the NrdI family.

In terms of biological role, probably involved in ribonucleotide reductase function. The sequence is that of Protein NrdI from Streptococcus pyogenes serotype M1.